We begin with the raw amino-acid sequence, 141 residues long: Holo-[acyl-carrier-protein] synthase (141 aa).

Residues Asp-7 and Glu-57 each coordinate Mg(2+).

This sequence belongs to the P-Pant transferase superfamily. AcpS family. Mg(2+) serves as cofactor.

The protein localises to the cytoplasm. It catalyses the reaction apo-[ACP] + CoA = holo-[ACP] + adenosine 3',5'-bisphosphate + H(+). In terms of biological role, transfers the 4'-phosphopantetheine moiety from coenzyme A to a Ser of acyl-carrier-protein. In Corynebacterium efficiens (strain DSM 44549 / YS-314 / AJ 12310 / JCM 11189 / NBRC 100395), this protein is Holo-[acyl-carrier-protein] synthase.